The chain runs to 105 residues: Met repressor (105 aa).

The protein belongs to the MetJ family. Homodimer.

Its subcellular location is the cytoplasm. In terms of biological role, this regulatory protein, when combined with SAM (S-adenosylmethionine) represses the expression of the methionine regulon and of enzymes involved in SAM synthesis. The protein is Met repressor of Yersinia enterocolitica serotype O:8 / biotype 1B (strain NCTC 13174 / 8081).